The primary structure comprises 469 residues: Glutamate--tRNA ligase (469 aa).

A 'HIGH' region motif is present at residues 9–19 (PSPTGFLHVGG). Zn(2+)-binding residues include cysteine 98, cysteine 100, cysteine 125, and aspartate 127. The 'KMSKS' region motif lies at 236 to 240 (KLSKR). Lysine 239 contributes to the ATP binding site.

This sequence belongs to the class-I aminoacyl-tRNA synthetase family. Glutamate--tRNA ligase type 1 subfamily. In terms of assembly, monomer. Zn(2+) serves as cofactor.

Its subcellular location is the cytoplasm. It catalyses the reaction tRNA(Glu) + L-glutamate + ATP = L-glutamyl-tRNA(Glu) + AMP + diphosphate. In terms of biological role, catalyzes the attachment of glutamate to tRNA(Glu) in a two-step reaction: glutamate is first activated by ATP to form Glu-AMP and then transferred to the acceptor end of tRNA(Glu). The sequence is that of Glutamate--tRNA ligase from Shewanella sp. (strain W3-18-1).